A 258-amino-acid polypeptide reads, in one-letter code: Small ribosomal subunit protein mS23 (258 aa).

The protein belongs to the mitochondrion-specific ribosomal protein mS23 family. As to quaternary structure, component of the mitochondrial small ribosomal subunit.

It localises to the mitochondrion. The polypeptide is Small ribosomal subunit protein mS23 (rsm25) (Aspergillus fumigatus (strain ATCC MYA-4609 / CBS 101355 / FGSC A1100 / Af293) (Neosartorya fumigata)).